The chain runs to 128 residues: Large ribosomal subunit protein mL52 (128 aa).

Residues 1-28 (MLQIAKLCLATSGRITAQRYVAVTTARA) constitute a mitochondrion transit peptide.

It belongs to the mitochondrion-specific ribosomal protein mL52 family. As to quaternary structure, component of the mitochondrial ribosome large subunit (39S) which comprises a 16S rRNA and about 50 distinct proteins.

It localises to the mitochondrion. The sequence is that of Large ribosomal subunit protein mL52 (mRpL52) from Drosophila pseudoobscura pseudoobscura (Fruit fly).